Reading from the N-terminus, the 353-residue chain is Holliday junction branch migration complex subunit RuvB (353 aa).

The tract at residues Met-1–Tyr-182 is large ATPase domain (RuvB-L). ATP-binding positions include Ile-21, Arg-22, Gly-63, Lys-66, Thr-67, Thr-68, Glu-129–Phe-131, Arg-172, Tyr-182, and Arg-219. Position 67 (Thr-67) interacts with Mg(2+). Residues Asn-183–Asp-253 are small ATPAse domain (RuvB-S). Residues Val-256–Leu-353 are head domain (RuvB-H). Arg-292, Arg-311, and Arg-316 together coordinate DNA.

This sequence belongs to the RuvB family. In terms of assembly, homohexamer. Forms an RuvA(8)-RuvB(12)-Holliday junction (HJ) complex. HJ DNA is sandwiched between 2 RuvA tetramers; dsDNA enters through RuvA and exits via RuvB. An RuvB hexamer assembles on each DNA strand where it exits the tetramer. Each RuvB hexamer is contacted by two RuvA subunits (via domain III) on 2 adjacent RuvB subunits; this complex drives branch migration. In the full resolvosome a probable DNA-RuvA(4)-RuvB(12)-RuvC(2) complex forms which resolves the HJ.

Its subcellular location is the cytoplasm. The catalysed reaction is ATP + H2O = ADP + phosphate + H(+). In terms of biological role, the RuvA-RuvB-RuvC complex processes Holliday junction (HJ) DNA during genetic recombination and DNA repair, while the RuvA-RuvB complex plays an important role in the rescue of blocked DNA replication forks via replication fork reversal (RFR). RuvA specifically binds to HJ cruciform DNA, conferring on it an open structure. The RuvB hexamer acts as an ATP-dependent pump, pulling dsDNA into and through the RuvAB complex. RuvB forms 2 homohexamers on either side of HJ DNA bound by 1 or 2 RuvA tetramers; 4 subunits per hexamer contact DNA at a time. Coordinated motions by a converter formed by DNA-disengaged RuvB subunits stimulates ATP hydrolysis and nucleotide exchange. Immobilization of the converter enables RuvB to convert the ATP-contained energy into a lever motion, pulling 2 nucleotides of DNA out of the RuvA tetramer per ATP hydrolyzed, thus driving DNA branch migration. The RuvB motors rotate together with the DNA substrate, which together with the progressing nucleotide cycle form the mechanistic basis for DNA recombination by continuous HJ branch migration. Branch migration allows RuvC to scan DNA until it finds its consensus sequence, where it cleaves and resolves cruciform DNA. The sequence is that of Holliday junction branch migration complex subunit RuvB from Thioalkalivibrio sulfidiphilus (strain HL-EbGR7).